The chain runs to 29 residues: Dermaseptin-H7 (29 aa).

Position 29 is a leucine amide (Leu29).

The protein belongs to the frog skin active peptide (FSAP) family. Dermaseptin subfamily. As to expression, expressed by the skin glands.

The protein resides in the secreted. In terms of biological role, has antibacterial activity against the Gram-negative bacterium E.coli and the Gram-positive bacterium S.aureus. Has antiprotozoal activity against L.amazonensis. Has antifungal activity. Has no hemolytic activity. This is Dermaseptin-H7 from Pithecopus hypochondrialis (Orange-legged leaf frog).